The chain runs to 626 residues: Phosphomethylpyrimidine synthase (626 aa).

The interval methionine 1–glutamine 22 is disordered. Residues leucine 10–glutamine 22 are compositionally biased toward polar residues. Substrate-binding positions include asparagine 232, methionine 261, tyrosine 290, histidine 326, serine 346–glycine 348, aspartate 387–arginine 390, and glutamate 426. Histidine 430 is a Zn(2+) binding site. Tyrosine 453 serves as a coordination point for substrate. Zn(2+) is bound at residue histidine 494. Positions 574, 577, and 582 each coordinate [4Fe-4S] cluster.

This sequence belongs to the ThiC family. In terms of assembly, homodimer. [4Fe-4S] cluster serves as cofactor.

It catalyses the reaction 5-amino-1-(5-phospho-beta-D-ribosyl)imidazole + S-adenosyl-L-methionine = 4-amino-2-methyl-5-(phosphooxymethyl)pyrimidine + CO + 5'-deoxyadenosine + formate + L-methionine + 3 H(+). It participates in cofactor biosynthesis; thiamine diphosphate biosynthesis. Its function is as follows. Catalyzes the synthesis of the hydroxymethylpyrimidine phosphate (HMP-P) moiety of thiamine from aminoimidazole ribotide (AIR) in a radical S-adenosyl-L-methionine (SAM)-dependent reaction. This chain is Phosphomethylpyrimidine synthase, found in Pseudomonas putida (strain GB-1).